A 312-amino-acid polypeptide reads, in one-letter code: Glycine--tRNA ligase alpha subunit (312 aa).

This sequence belongs to the class-II aminoacyl-tRNA synthetase family. In terms of assembly, tetramer of two alpha and two beta subunits.

The protein localises to the cytoplasm. It carries out the reaction tRNA(Gly) + glycine + ATP = glycyl-tRNA(Gly) + AMP + diphosphate. This Nostoc punctiforme (strain ATCC 29133 / PCC 73102) protein is Glycine--tRNA ligase alpha subunit.